We begin with the raw amino-acid sequence, 186 residues long: ATP synthase subunit delta (186 aa).

It belongs to the ATPase delta chain family. In terms of assembly, F-type ATPases have 2 components, F(1) - the catalytic core - and F(0) - the membrane proton channel. F(1) has five subunits: alpha(3), beta(3), gamma(1), delta(1), epsilon(1). CF(0) has four main subunits: a(1), b(1), b'(1) and c(10-14). The alpha and beta chains form an alternating ring which encloses part of the gamma chain. F(1) is attached to F(0) by a central stalk formed by the gamma and epsilon chains, while a peripheral stalk is formed by the delta, b and b' chains.

It is found in the cell inner membrane. Its function is as follows. F(1)F(0) ATP synthase produces ATP from ADP in the presence of a proton or sodium gradient. F-type ATPases consist of two structural domains, F(1) containing the extramembraneous catalytic core and F(0) containing the membrane proton channel, linked together by a central stalk and a peripheral stalk. During catalysis, ATP synthesis in the catalytic domain of F(1) is coupled via a rotary mechanism of the central stalk subunits to proton translocation. Functionally, this protein is part of the stalk that links CF(0) to CF(1). It either transmits conformational changes from CF(0) to CF(1) or is implicated in proton conduction. This is ATP synthase subunit delta from Jannaschia sp. (strain CCS1).